Reading from the N-terminus, the 214-residue chain is Soluble inorganic pyrophosphatase (214 aa).

A disordered region spans residues 1–20; it reads MSEEDKTAASAEQPKRAPKL. The substrate site is built by Lys64, Arg78, and Tyr90. Mg(2+) is bound by residues Asp100, Asp105, and Asp137. Tyr174 serves as a coordination point for substrate.

It belongs to the PPase family. Mg(2+) is required as a cofactor.

It is found in the cytoplasm. The enzyme catalyses diphosphate + H2O = 2 phosphate + H(+). In Zea mays (Maize), this protein is Soluble inorganic pyrophosphatase (IPP).